We begin with the raw amino-acid sequence, 370 residues long: Dihydroorotate dehydrogenase (370 aa).

Substrate is bound by residues Lys82, 135 to 139, and Asn200; that span reads NSFGM. 82-83 serves as a coordination point for FMN; it reads KT. An FMN-binding site is contributed by Asn200. The active-site Nucleophile is the Cys203. FMN-binding residues include Lys241 and Ile269. 270-271 serves as a coordination point for substrate; it reads NT. FMN is bound by residues Gly297, 328 to 329, and 350 to 351; these read GG and AT.

This sequence belongs to the dihydroorotate dehydrogenase family. It depends on FMN as a cofactor.

The catalysed reaction is (S)-dihydroorotate + A = orotate + AH2. It functions in the pathway pyrimidine metabolism; UMP biosynthesis via de novo pathway. Functionally, catalyzes the conversion of dihydroorotate to orotate. Participates in the pyrimidine biosynthetic pathway. The chain is Dihydroorotate dehydrogenase (pyr4) from Dictyostelium discoideum (Social amoeba).